The sequence spans 169 residues: Der GTPase-activating protein YihI (169 aa).

Disordered stretches follow at residues 1 to 100 (MKPS…AELE) and 144 to 169 (GLSY…LRGN). Over residues 10 to 19 (SKGHAKARRK) the composition is skewed to basic residues. Residues 20–30 (TREELDQEARD) are compositionally biased toward basic and acidic residues. The span at 31 to 40 (RKRQKKRRGH) shows a compositional bias: basic residues. Polar residues predominate over residues 49 to 58 (GNTSSGSKGQ). A compositionally biased stretch (acidic residues) spans 147 to 159 (YDDDEEEEEDEKQ). Basic and acidic residues predominate over residues 160–169 (EDMMRLLRGN).

Belongs to the YihI family. In terms of assembly, interacts with Der.

Functionally, a GTPase-activating protein (GAP) that modifies Der/EngA GTPase function. May play a role in ribosome biogenesis. This chain is Der GTPase-activating protein YihI, found in Escherichia coli (strain SMS-3-5 / SECEC).